We begin with the raw amino-acid sequence, 414 residues long: Esterase FrsA (414 aa).

The protein belongs to the FrsA family.

The enzyme catalyses a carboxylic ester + H2O = an alcohol + a carboxylate + H(+). Functionally, catalyzes the hydrolysis of esters. In Escherichia coli O81 (strain ED1a), this protein is Esterase FrsA.